We begin with the raw amino-acid sequence, 192 residues long: Adenylate kinase (192 aa).

ATP is bound at residue 12–17 (GSGKTT). The tract at residues 34–63 (STGDLLRAEVASGSELGKTIDSFISKGNLV) is NMP. AMP-binding positions include Thr-35, Arg-40, 61–63 (NLV), 88–91 (GYPR), and Gln-95. An LID region spans residues 130–136 (GRNRGTD). Arg-131 provides a ligand contact to ATP. AMP-binding residues include Arg-133 and Arg-145. Arg-173 is a binding site for ATP.

This sequence belongs to the adenylate kinase family. As to quaternary structure, monomer.

It is found in the cytoplasm. The enzyme catalyses AMP + ATP = 2 ADP. Its pathway is purine metabolism; AMP biosynthesis via salvage pathway; AMP from ADP: step 1/1. In terms of biological role, catalyzes the reversible transfer of the terminal phosphate group between ATP and AMP. Plays an important role in cellular energy homeostasis and in adenine nucleotide metabolism. The protein is Adenylate kinase of Campylobacter jejuni (strain RM1221).